The chain runs to 235 residues: Carboxy-S-adenosyl-L-methionine synthase (235 aa).

Residues Tyr35, 60–62 (GCS), 83–84 (DN), Asn124, and Arg191 contribute to the S-adenosyl-L-methionine site.

It belongs to the class I-like SAM-binding methyltransferase superfamily. Cx-SAM synthase family. Homodimer.

It carries out the reaction prephenate + S-adenosyl-L-methionine = carboxy-S-adenosyl-L-methionine + 3-phenylpyruvate + H2O. Catalyzes the conversion of S-adenosyl-L-methionine (SAM) to carboxy-S-adenosyl-L-methionine (Cx-SAM). In Campylobacter jejuni subsp. jejuni serotype O:6 (strain 81116 / NCTC 11828), this protein is Carboxy-S-adenosyl-L-methionine synthase.